A 222-amino-acid polypeptide reads, in one-letter code: UPF0758 protein YicR (222 aa).

The MPN domain maps to 100 to 222; that stretch reads PLLSPEMTRE…YVSFAERGWI (123 aa). Residues His171, His173, and Asp184 each coordinate Zn(2+). The JAMM motif motif lies at 171–184; sequence HNHPSGCAEPSKAD.

Belongs to the UPF0758 family. YicR subfamily.

This Shigella dysenteriae serotype 1 (strain Sd197) protein is UPF0758 protein YicR.